The primary structure comprises 278 residues: Bifunctional protein FolD (278 aa).

NADP(+) contacts are provided by residues 165–167 (GRS), Ser-190, and Thr-231.

This sequence belongs to the tetrahydrofolate dehydrogenase/cyclohydrolase family. Homodimer.

The enzyme catalyses (6R)-5,10-methylene-5,6,7,8-tetrahydrofolate + NADP(+) = (6R)-5,10-methenyltetrahydrofolate + NADPH. The catalysed reaction is (6R)-5,10-methenyltetrahydrofolate + H2O = (6R)-10-formyltetrahydrofolate + H(+). It functions in the pathway one-carbon metabolism; tetrahydrofolate interconversion. Catalyzes the oxidation of 5,10-methylenetetrahydrofolate to 5,10-methenyltetrahydrofolate and then the hydrolysis of 5,10-methenyltetrahydrofolate to 10-formyltetrahydrofolate. The protein is Bifunctional protein FolD of Clostridium novyi (strain NT).